A 329-amino-acid chain; its full sequence is D-lactate dehydrogenase (329 aa).

Residues 154–155 (KI), Asp174, 205–206 (CP), Asn211, 232–234 (TSR), and Asp258 each bind NAD(+). Residue Arg234 is part of the active site. Glu263 is an active-site residue. The active-site Proton donor is the His295.

The protein belongs to the D-isomer specific 2-hydroxyacid dehydrogenase family.

It catalyses the reaction (R)-lactate + NAD(+) = pyruvate + NADH + H(+). Functionally, fermentative lactate dehydrogenase. In Escherichia coli (strain K12), this protein is D-lactate dehydrogenase (ldhA).